Reading from the N-terminus, the 625-residue chain is MSLDLQHYPTLALAQTPDKLRQLPQDKLRELADELREYLLNSVSQTSGHFASGLGTVELTVALHYVYNTPFDRLLWDVGHQAYPHKILTGRAERMSTIRQKNGLHPFPWPPESEYDTFAVGHSSTSISAALGMAVAAEKEGKDRKVVSVIGDGAMTAGMAFEALNHAGDIKKDMVVVLNDNEMSISENVGALNSHLARLLTGNFFNSIRDGGKKLLSNVPPIKEFASRAEEHLKGMVVPGTIFEELGFNYIGPIDGHDVNAVVDTLRNMRNFDGPQLLHVVTKKGKGYAVAEEDPIKFHAVPKFNPADNALPKSKPSAPTYSAIFGQWLCDMAAQDPKLMAVTPAMREGSGMVEFSQRFPEQYFDVAIAEQHAVTFGAGLAKDGMNAVVAIYSSFLQRAYDQLIHDVAIQDLPVLFAIDRAGIVGADGPTHQGAFDIAFLRCIPNMVVMAPSDENECRQMLYTGHKLQKPAAVRYPRGAGMGVTPDEAMTALEIGKSRTCRETAKDKSESVAILNFGCLLPYALEAAVAIDATVIDMRFIKPLDGDAVLKAANEHSALITLEDGCIMGGAGSAVLEHLQQNGVLKAVKMLGLPDSFILQGTQQEMYKEHGLDAEGIIAAAKSLIG.

Thiamine diphosphate is bound by residues His80 and 121–123 (GHS). Mg(2+) is bound at residue Asp152. Thiamine diphosphate-binding positions include 153–154 (GA), Asn181, Tyr288, and Glu370. Asn181 is a binding site for Mg(2+).

It belongs to the transketolase family. DXPS subfamily. As to quaternary structure, homodimer. It depends on Mg(2+) as a cofactor. Thiamine diphosphate is required as a cofactor.

It catalyses the reaction D-glyceraldehyde 3-phosphate + pyruvate + H(+) = 1-deoxy-D-xylulose 5-phosphate + CO2. Its pathway is metabolic intermediate biosynthesis; 1-deoxy-D-xylulose 5-phosphate biosynthesis; 1-deoxy-D-xylulose 5-phosphate from D-glyceraldehyde 3-phosphate and pyruvate: step 1/1. Its function is as follows. Catalyzes the acyloin condensation reaction between C atoms 2 and 3 of pyruvate and glyceraldehyde 3-phosphate to yield 1-deoxy-D-xylulose-5-phosphate (DXP). This chain is 1-deoxy-D-xylulose-5-phosphate synthase, found in Alteromonas mediterranea (strain DSM 17117 / CIP 110805 / LMG 28347 / Deep ecotype).